We begin with the raw amino-acid sequence, 419 residues long: UDP-N-acetylglucosamine 1-carboxyvinyltransferase (419 aa).

22 to 23 (KN) serves as a coordination point for phosphoenolpyruvate. Residue Arg-95 coordinates UDP-N-acetyl-alpha-D-glucosamine. The Proton donor role is filled by Cys-119. Cys-119 is subject to 2-(S-cysteinyl)pyruvic acid O-phosphothioketal. UDP-N-acetyl-alpha-D-glucosamine-binding positions include 164-167 (KVSV), Asp-308, and Ile-330.

The protein belongs to the EPSP synthase family. MurA subfamily.

Its subcellular location is the cytoplasm. It catalyses the reaction phosphoenolpyruvate + UDP-N-acetyl-alpha-D-glucosamine = UDP-N-acetyl-3-O-(1-carboxyvinyl)-alpha-D-glucosamine + phosphate. The protein operates within cell wall biogenesis; peptidoglycan biosynthesis. Cell wall formation. Adds enolpyruvyl to UDP-N-acetylglucosamine. This Rickettsia prowazekii (strain Madrid E) protein is UDP-N-acetylglucosamine 1-carboxyvinyltransferase.